The following is a 666-amino-acid chain: Vicilin-like antimicrobial peptides 2-1 (666 aa).

The signal sequence occupies residues 1-27; that stretch reads MAINTSNLCSLLFLLSLFLLSTTVSLA. Disordered regions lie at residues 161 to 191 and 219 to 254; these read QQKRYEEQQREDEEKYEERMKEEDNKRDPQQ and QQRQHGRGGDMMNPQRGGSGRYEEGEEEQSDNPYYF. Cupin type-1 domains lie at 271–410 and 455–625; these read SVLE…EKLR and YNLF…KEVE. The disordered stretch occupies residues 629 to 655; that stretch reads NSQDQSIFFPGPRQHQQQSPRSTKQQQ. A compositionally biased stretch (low complexity) spans 642 to 655; that stretch reads QHQQQSPRSTKQQQ.

Belongs to the 7S seed storage protein family.

The protein localises to the secreted. Antimicrobial peptides 2b, 2c and 2d have antibacterial and antifungal activity against a range of species. This is Vicilin-like antimicrobial peptides 2-1 from Macadamia integrifolia (Macadamia nut).